We begin with the raw amino-acid sequence, 90 residues long: Accessory gland-specific peptide 26Ab (90 aa).

Residues 1–21 (MNYFAVICIFSCICLWQFSDA) form the signal peptide.

In terms of tissue distribution, main cells and secondary cells of the accessory glands of 1 day old virgin males (at protein level). In 5 day old virgin males, only detected in the secondary cells (at protein level). Reappears in the main cells after mating (at protein level). First detected in adult males 3-4 hr after eclosion, levels increase reaching a peak at day 3-5 which is maintained until at least day 10 of adulthood (at protein level). In unmated male adults, levels are maintained for the first 6 days of adulthood and then gradually decrease for at least the next 8 days. No expression in females.

Its subcellular location is the secreted. It is found in the extracellular space. It localises to the cytoplasm. This protein is transferred from male to female during mating and may affect egglaying and behavior after mating. The chain is Accessory gland-specific peptide 26Ab from Drosophila melanogaster (Fruit fly).